A 185-amino-acid chain; its full sequence is Acireductone dioxygenase (185 aa).

Fe(2+)-binding residues include His96, His98, Glu102, and His140. Ni(2+) is bound by residues His96, His98, Glu102, and His140.

It belongs to the acireductone dioxygenase (ARD) family. In terms of assembly, monomer. Requires Fe(2+) as cofactor. The cofactor is Ni(2+).

The catalysed reaction is 1,2-dihydroxy-5-(methylsulfanyl)pent-1-en-3-one + O2 = 3-(methylsulfanyl)propanoate + CO + formate + 2 H(+). It catalyses the reaction 1,2-dihydroxy-5-(methylsulfanyl)pent-1-en-3-one + O2 = 4-methylsulfanyl-2-oxobutanoate + formate + 2 H(+). The protein operates within amino-acid biosynthesis; L-methionine biosynthesis via salvage pathway; L-methionine from S-methyl-5-thio-alpha-D-ribose 1-phosphate: step 5/6. In terms of biological role, catalyzes 2 different reactions between oxygen and the acireductone 1,2-dihydroxy-3-keto-5-methylthiopentene (DHK-MTPene) depending upon the metal bound in the active site. Fe-containing acireductone dioxygenase (Fe-ARD) produces formate and 2-keto-4-methylthiobutyrate (KMTB), the alpha-ketoacid precursor of methionine in the methionine recycle pathway. Ni-containing acireductone dioxygenase (Ni-ARD) produces methylthiopropionate, carbon monoxide and formate, and does not lie on the methionine recycle pathway. The protein is Acireductone dioxygenase of Marinobacter nauticus (strain ATCC 700491 / DSM 11845 / VT8) (Marinobacter aquaeolei).